The primary structure comprises 534 residues: ATP-dependent rRNA helicase RRP3 (534 aa).

A disordered region spans residues 67 to 107 (KQQALQKQQKQQKQQEQENANHNQTESSLSSSSSTTSSSIT). Composition is skewed to low complexity over residues 68 to 80 (QQAL…QQKQ) and 91 to 107 (TESS…SSIT). A Q motif motif is present at residues 118–146 (KTFKELNLVPDLLESIESMKFTKPTPIQS). Positions 149 to 320 (IPHALEGKDI…RASLHNPVRV (172 aa)) constitute a Helicase ATP-binding domain. An ATP-binding site is contributed by 162 to 169 (AQTGSGKT). Positions 268 to 271 (DEAD) match the DEAD box motif. In terms of domain architecture, Helicase C-terminal spans 347–492 (ILIHLLNEFM…EDKPPKEVLD (146 aa)). Composition is skewed to basic and acidic residues over residues 505–517 (AIRQ…DKRN) and 525–534 (NRDDADREER). Residues 505-534 (AIRQTKEIHDKRNGGGGRRRNRDDADREER) form a disordered region.

The protein belongs to the DEAD box helicase family. DDX47/RRP3 subfamily. Interacts with the SSU processome.

Its subcellular location is the nucleus. The enzyme catalyses ATP + H2O = ADP + phosphate + H(+). Functionally, ATP-dependent rRNA helicase required for pre-ribosomal RNA processing. Involved in the maturation of the 35S-pre-rRNA and to its cleavage to mature 18S rRNA. This is ATP-dependent rRNA helicase RRP3 from Candida albicans (strain SC5314 / ATCC MYA-2876) (Yeast).